A 662-amino-acid polypeptide reads, in one-letter code: Hypoxia-inducible factor 3-alpha (662 aa).

The interval 1-25 is disordered; that stretch reads MDWDQDRSNTELRKEKSRDAARSRR. Residues 12-65 enclose the bHLH domain; that stretch reads LRKEKSRDAARSRRSQETEVLYQLAHTLPFARGVSAHLDKASIMRLTISYLRMH. The nuclear localization signal (isoform 2) stretch occupies residues 75-98; sequence QVEKGGEPLDACYLKALEGFVMVL. PAS domains follow at residues 80 to 150 and 225 to 295; these read GEPL…PNLS and PHPA…LSKG. Residues 228-272 are nuclear export signal (isoform 2); sequence ASLEPPLGRGAFLSRHSLDMKFTYCDERIAEVAGYSPDDLIGCSA. Disordered stretches follow at residues 352–377 and 416–446; these read EQTE…GNSV and PILD…DLPD. Residues 414-418 carry the LRRLL motif; the sequence is MAPIL. Over residues 426–437 the composition is skewed to low complexity; sequence TPSTPQATRRPQ. The interval 448-581 is ODD; it reads LTVGLENAHR…SEDKGLELLE (134 aa). The NTAD stretch occupies residues 450-501; it reads VGLENAHRLSTAQKNKTVETDLDIAQDPDTLDLEMLAPYISMDDDFQLNSSE. K463 is covalently cross-linked (Glycyl lysine isopeptide (Lys-Gly) (interchain with G-Cter in ubiquitin)). An LAPYISMD motif is present at residues 485-492; that stretch reads LAPYISMD. 4-hydroxyproline is present on P487. The disordered stretch occupies residues 500–595; it reads SEQLPKVHRR…KRSPRLEPGS (96 aa). The span at 505–521 shows a compositional bias: basic residues; the sequence is KVHRRPPRVARRPRARS. K565 is covalently cross-linked (Glycyl lysine isopeptide (Lys-Gly) (interchain with G-Cter in ubiquitin)). The segment covering 572 to 584 has biased composition (basic and acidic residues); sequence SEDKGLELLETKP.

As to quaternary structure, isoform 1 interacts with ARNT. Isoform 2 interacts with HIF1A. Isoform 2 interacts EPAS1. Isoform 2 interacts (via C-terminus domain) with BAD; the interaction reduces the binding between BAD and BAX. Isoform 2 (via C-terminus domain) interacts with BCL2L2 and MCL1. Interacts with VHL. Post-translationally, in normoxia, hydroxylated on Pro-487 in the oxygen-dependent degradation domain (ODD) by PHD. The hydroxylated proline promotes interaction with VHL, initiating rapid ubiquitination and subsequent proteasomal degradation. Ubiquitinated; ubiquitination occurs in a VHL- and oxygen-dependent pathway and subsequently targeted for proteasomal degradation. Isoform 3 is expressed in endothelial cells of vessels and capillaries in alveoli of the neonatal lung (at protein level). Expressed in lung, brain, heart and kidney. Isoform 2 is expressed in heart and lung. Isoform 2 is highly expressed in the epithelial cell layer of the cornea with lower expression in the layers of ganglion cells, inner nuclear cells, and rods and cones of the retina. Isoform 2 is expressed in the cerebellum only in the Purkinje cell layer.

It is found in the nucleus. The protein localises to the cytoplasm. The protein resides in the nucleus speckle. Its subcellular location is the mitochondrion. Functionally, acts as a transcriptional regulator in adaptive response to low oxygen tension. Acts as a regulator of hypoxia-inducible gene expression. Plays a role in the development of the cardiorespiratory system. Acts as a positive regulator of hypoxia-inducible gene expression. Associates to core DNA sequence 5'-TACGTG-3' within the hypoxia response element (HRE) of target gene promoters in a ARNT-dependent manner, and hence also participates in the transcriptional activation of reporter genes driven by HRE. Its function is as follows. Attenuates the ability of transcription factor HIF1A, EPAS1 and the HIF1A-ARNT complex to bind to hypoxia-responsive elements (HRE) located within the enhancer/promoter of hypoxia-inducible target genes and hence inhibits HRE-driven transcriptional activation. Functions as an inhibitor of angiogenesis in hypoxic cells of the cornea. May act as a tumor suppressor. May also be involved in apoptosis. In terms of biological role, attenuates the ability of transcription factor HIF1A, EPAS1 and the HIF1A-ARNT complex to bind to hypoxia-responsive elements (HRE) located within the enhancer/promoter of hypoxia-inducible target genes and hence inhibits HRE-driven transcriptional activation. Also plays a role in the development of the lung and heart during embryonic and neonatal stages. This chain is Hypoxia-inducible factor 3-alpha, found in Mus musculus (Mouse).